We begin with the raw amino-acid sequence, 1017 residues long: Integrator complex subunit 3 (1017 aa).

The segment at E952–D1017 is disordered. Positions N983–D997 are enriched in acidic residues.

This sequence belongs to the Integrator subunit 3 family. Component of the Integrator complex, composed of core subunits INTS1, INTS2, INTS3, INTS4, INTS5, INTS6, INTS7, INTS8, INTS9/RC74, INTS10, INTS11/CPSF3L, INTS12, INTS13, INTS14 and INTS15. The core complex associates with protein phosphatase 2A subunits PPP2CA and PPP2R1A, to form the Integrator-PP2A (INTAC) complex. Component of the SOSS complex.

It is found in the nucleus. Its subcellular location is the cytoplasm. In terms of biological role, component of the integrator complex, a multiprotein complex that terminates RNA polymerase II (Pol II) transcription in the promoter-proximal region of genes. The integrator complex provides a quality checkpoint during transcription elongation by driving premature transcription termination of transcripts that are unfavorably configured for transcriptional elongation: the complex terminates transcription by (1) catalyzing dephosphorylation of the C-terminal domain (CTD) of Pol II subunit POLR2A/RPB1 and SUPT5H/SPT5, (2) degrading the exiting nascent RNA transcript via endonuclease activity and (3) promoting the release of Pol II from bound DNA. The integrator complex is also involved in terminating the synthesis of non-coding Pol II transcripts, such as enhancer RNAs (eRNAs), small nuclear RNAs (snRNAs), telomerase RNAs and long non-coding RNAs (lncRNAs). Within the integrator complex, INTS3 is involved in the post-termination step: INTS3 binds INTS7 in the open conformation of integrator complex and prevents the rebinding of Pol II to the integrator after termination cycle. Functionally, component of the SOSS complex, a multiprotein complex that functions downstream of the MRN complex to promote DNA repair and G2/M checkpoint. The SOSS complex associates with single-stranded DNA at DNA lesions and influences diverse endpoints in the cellular DNA damage response including cell-cycle checkpoint activation, recombinational repair and maintenance of genomic stability. The SOSS complex is required for efficient homologous recombination-dependent repair of double-strand breaks (DSBs) and ATM-dependent signaling pathways. In the SOSS complex, it is required for the assembly of the complex and for stabilization of the complex at DNA damage sites. In Danio rerio (Zebrafish), this protein is Integrator complex subunit 3 (ints3).